The following is a 179-amino-acid chain: NAD(P)H-quinone oxidoreductase subunit J (179 aa).

The protein belongs to the complex I 30 kDa subunit family. NDH-1 can be composed of about 15 different subunits; different subcomplexes with different compositions have been identified which probably have different functions. Post-translationally, in at one experiment the initiator methionine has been seen to be kept and removed.

It localises to the cellular thylakoid membrane. The enzyme catalyses a plastoquinone + NADH + (n+1) H(+)(in) = a plastoquinol + NAD(+) + n H(+)(out). The catalysed reaction is a plastoquinone + NADPH + (n+1) H(+)(in) = a plastoquinol + NADP(+) + n H(+)(out). Its function is as follows. NDH-1 shuttles electrons from an unknown electron donor, via FMN and iron-sulfur (Fe-S) centers, to quinones in the respiratory and/or the photosynthetic chain. The immediate electron acceptor for the enzyme in this species is believed to be plastoquinone. Couples the redox reaction to proton translocation, and thus conserves the redox energy in a proton gradient. Cyanobacterial NDH-1 also plays a role in inorganic carbon-concentration. This Synechocystis sp. (strain ATCC 27184 / PCC 6803 / Kazusa) protein is NAD(P)H-quinone oxidoreductase subunit J.